The chain runs to 248 residues: Cytochrome c oxidase subunit 2 (248 aa).

The Mitochondrial intermembrane portion of the chain corresponds to 1 to 36 (MLFFNSILNDAPSSWALYFQDGASPSYLGVTHLNDY). Residues 37–57 (LMFYLTFIFIGVIYAICKAVI) form a helical membrane-spanning segment. Topologically, residues 58–75 (EYNYNSHPIAAKYTTHGS) are mitochondrial matrix. Residues 76–100 (IVEFIWTLIPALILILVALPSFKLL) form a helical membrane-spanning segment. At 101–248 (YLLDEVQKPS…DFLAWLEENS (148 aa)) the chain is on the mitochondrial intermembrane side. Positions 182, 217, 219, 221, 225, and 228 each coordinate Cu cation. Residue E219 coordinates Mg(2+).

It belongs to the cytochrome c oxidase subunit 2 family. Component of the cytochrome c oxidase (complex IV, CIV), a multisubunit enzyme composed of a catalytic core of 3 subunits and several supernumerary subunits. The complex exists as a monomer or a dimer and forms supercomplexes (SCs) in the inner mitochondrial membrane with ubiquinol-cytochrome c oxidoreductase (cytochrome b-c1 complex, complex III, CIII). Cu cation is required as a cofactor.

The protein localises to the mitochondrion inner membrane. It carries out the reaction 4 Fe(II)-[cytochrome c] + O2 + 8 H(+)(in) = 4 Fe(III)-[cytochrome c] + 2 H2O + 4 H(+)(out). Component of the cytochrome c oxidase, the last enzyme in the mitochondrial electron transport chain which drives oxidative phosphorylation. The respiratory chain contains 3 multisubunit complexes succinate dehydrogenase (complex II, CII), ubiquinol-cytochrome c oxidoreductase (cytochrome b-c1 complex, complex III, CIII) and cytochrome c oxidase (complex IV, CIV), that cooperate to transfer electrons derived from NADH and succinate to molecular oxygen, creating an electrochemical gradient over the inner membrane that drives transmembrane transport and the ATP synthase. Cytochrome c oxidase is the component of the respiratory chain that catalyzes the reduction of oxygen to water. Electrons originating from reduced cytochrome c in the intermembrane space (IMS) are transferred via the dinuclear copper A center (CU(A)) of subunit 2 and heme A of subunit 1 to the active site in subunit 1, a binuclear center (BNC) formed by heme A3 and copper B (CU(B)). The BNC reduces molecular oxygen to 2 water molecules using 4 electrons from cytochrome c in the IMS and 4 protons from the mitochondrial matrix. In Schizosaccharomyces pombe (strain 972 / ATCC 24843) (Fission yeast), this protein is Cytochrome c oxidase subunit 2 (cox2).